A 101-amino-acid polypeptide reads, in one-letter code: Ribonuclease kappa-A (101 aa).

2 helical membrane passes run 13 to 33 (ACGI…GVFF) and 68 to 88 (VSYN…FSFC).

The protein belongs to the RNase K family.

It is found in the membrane. In terms of biological role, endoribonuclease which preferentially cleaves ApU and ApG phosphodiester bonds. The polypeptide is Ribonuclease kappa-A (rnasek-a) (Xenopus laevis (African clawed frog)).